The primary structure comprises 100 residues: Large ribosomal subunit protein bL27 (100 aa).

Positions 1–9 (MLSINLSLC) are excised as a propeptide.

The protein belongs to the bacterial ribosomal protein bL27 family. In terms of processing, the N-terminus is cleaved by ribosomal processing cysteine protease Prp.

The chain is Large ribosomal subunit protein bL27 from Clostridium acetobutylicum (strain ATCC 824 / DSM 792 / JCM 1419 / IAM 19013 / LMG 5710 / NBRC 13948 / NRRL B-527 / VKM B-1787 / 2291 / W).